The sequence spans 802 residues: MTASVKEGAHSEVLDKRRVNTKLGQKITANSLSSDANSSMNSKRLGLGIARRPGDNLLASISDNYGGKYEVSGENMTELPQPRGLFIHRNDRPISDDSIVTKNSELFSSGFSDDNNSGASSVETDELSSEGGINLGLNNLTVGPIASDEHNMDGSFISDNFEESFISTDSVSTLHIPNENRNHDKSFSYENGPQSRAHKMISTNTTSSTINANNMKSTGTLPPFRPRSNSYSSKHLGTSTLYDHSNSTSAILPNKQHYLTPSQRYRMRKERNDTSLRNSIRKKERFYDEQEPNMELQEGDIDDSLIWNIPMASFSTNSFLMSSGDPKHVRSHQSKPQPRFPQRHNFGSVPHFQPPLMSSALDFKAMPTSPVPGIDSTSDLQFIRETTENLSSVYLQSSNRLSRSKLLERTDSAEVLPIEFKEASEKGMEDLILVSEDKLDVVSHSRPSWLPPKDPEEKKLHENQISKSMSIASFEQLDRNKESEERHIQDETNRQKYVLLLDRGVTRNSSIQSLKKMIWETPLTVDTRWSIYDQLLQSDVRLISEQYIESFEQIMQVLNKMEFPRNKETEIEKLIDNSIKNKISGKQNISNDLLLMLQLKSISHQGLIPGDELLFHHFLTDPSTNQSLQHVWELVNLIQLTCFNDFTKEKYDIKIVEPRGVVSKYLSQDDSFKSEFNTSCLNSTTWWNILERVDHNLFMWIMDIIVVANSQCFKNYPINREKFKNKSWEYYKSKKVIVEYKVLASFALNVLLNYHFGFNDLISITTLEDKSFCIPMPLDNLFDEGYINNVFIRKWLHYYKKF.

Disordered regions lie at residues 207–230 and 323–345; these read SSTI…RSNS and SGDP…QRHN.

The protein belongs to the SBE2 family.

The protein localises to the cytoplasm. It is found in the golgi apparatus. Functionally, with SBE2, is involved in cell wall integrity and polarity processes like bud growth. The protein is Protein SBE22 (SBE22) of Vanderwaltozyma polyspora (strain ATCC 22028 / DSM 70294 / BCRC 21397 / CBS 2163 / NBRC 10782 / NRRL Y-8283 / UCD 57-17) (Kluyveromyces polysporus).